The following is a 316-amino-acid chain: Ribosomal RNA large subunit methyltransferase F (316 aa).

This sequence belongs to the methyltransferase superfamily. METTL16/RlmF family.

It localises to the cytoplasm. The enzyme catalyses adenosine(1618) in 23S rRNA + S-adenosyl-L-methionine = N(6)-methyladenosine(1618) in 23S rRNA + S-adenosyl-L-homocysteine + H(+). Its function is as follows. Specifically methylates the adenine in position 1618 of 23S rRNA. The chain is Ribosomal RNA large subunit methyltransferase F from Pseudomonas entomophila (strain L48).